Here is a 189-residue protein sequence, read N- to C-terminus: Guanylate kinase (189 aa).

The Guanylate kinase-like domain maps to 8–186; it reads GKLTVITGPS…AVIELESLMG (179 aa). 15-22 provides a ligand contact to ATP; it reads GPSGVGKG.

Belongs to the guanylate kinase family.

Its subcellular location is the cytoplasm. The enzyme catalyses GMP + ATP = GDP + ADP. Essential for recycling GMP and indirectly, cGMP. This Prochlorococcus marinus (strain MIT 9313) protein is Guanylate kinase.